The primary structure comprises 644 residues: Low affinity sulfate transporter 3 (644 aa).

Residues Met-1–Ser-19 show a composition bias toward polar residues. Residues Met-1–Pro-20 are disordered. 13 helical membrane passes run Ala-50–Thr-70, Leu-76–Leu-96, Leu-99–Gly-119, Ile-124–Ile-144, Leu-156–Leu-176, Leu-179–Ile-199, Pro-242–Gly-262, Phe-268–Phe-288, Ile-328–Ala-348, Cys-394–Phe-414, Leu-418–Ile-438, Leu-455–Ile-475, and Pro-518–Val-538. One can recognise an STAS domain in the interval Tyr-511 to Cys-635.

It belongs to the SLC26A/SulP transporter (TC 2.A.53) family.

The protein localises to the membrane. Its function is as follows. Low-affinity H(+)/sulfate cotransporter which may be involved in the internal transport of sulfate between cellular or subcellular compartments within the plant. In Stylosanthes hamata (Caribbean stylo), this protein is Low affinity sulfate transporter 3 (ST3).